The sequence spans 86 residues: Apolipoprotein C-I (86 aa).

An N-terminal signal peptide occupies residues 1-26 (MRLFLSLPVLVVVLLMILEGPGPAQG).

It belongs to the apolipoprotein C1 family.

Its subcellular location is the secreted. Functionally, inhibitor of lipoprotein binding to the low density lipoprotein (LDL) receptor, LDL receptor-related protein, and very low density lipoprotein (VLDL) receptor. Associates with high density lipoproteins (HDL) and the triacylglycerol-rich lipoproteins in the plasma and makes up about 10% of the protein of the VLDL and 2% of that of HDL. Appears to interfere directly with fatty acid uptake and is also the major plasma inhibitor of cholesteryl ester transfer protein (CETP). Binds free fatty acids and reduces their intracellular esterification. Modulates the interaction of APOE with beta-migrating VLDL and inhibits binding of beta-VLDL to the LDL receptor-related protein. The polypeptide is Apolipoprotein C-I (APOC1) (Ateles geoffroyi (Black-handed spider monkey)).